The sequence spans 209 residues: Uracil phosphoribosyltransferase (209 aa).

5-phospho-alpha-D-ribose 1-diphosphate contacts are provided by residues arginine 79, arginine 104, and 131–139 (DPMLATGAS). Uracil is bound by residues isoleucine 194 and 199-201 (GDA). Aspartate 200 is a binding site for 5-phospho-alpha-D-ribose 1-diphosphate.

This sequence belongs to the UPRTase family. The cofactor is Mg(2+).

It catalyses the reaction UMP + diphosphate = 5-phospho-alpha-D-ribose 1-diphosphate + uracil. Its pathway is pyrimidine metabolism; UMP biosynthesis via salvage pathway; UMP from uracil: step 1/1. Its activity is regulated as follows. Allosterically activated by GTP. Its function is as follows. Catalyzes the conversion of uracil and 5-phospho-alpha-D-ribose 1-diphosphate (PRPP) to UMP and diphosphate. This Staphylococcus haemolyticus (strain JCSC1435) protein is Uracil phosphoribosyltransferase.